The following is a 391-amino-acid chain: DNA-directed RNA polymerase subunit Rpo1C (391 aa).

It belongs to the RNA polymerase beta' chain family. Part of the RNA polymerase complex.

The protein localises to the cytoplasm. It carries out the reaction RNA(n) + a ribonucleoside 5'-triphosphate = RNA(n+1) + diphosphate. DNA-dependent RNA polymerase (RNAP) catalyzes the transcription of DNA into RNA using the four ribonucleoside triphosphates as substrates. Forms part of the jaw domain. The chain is DNA-directed RNA polymerase subunit Rpo1C from Thermococcus onnurineus (strain NA1).